A 98-amino-acid polypeptide reads, in one-letter code: NADH-ubiquinone oxidoreductase chain 4L (98 aa).

The next 3 helical transmembrane spans lie at 1 to 21 (MPSIYINIFLAFILALLGMLV), 29 to 49 (SLLCLEGMMLSLFVLITLTAL), and 61 to 81 (IILLVFAACEAAVGLALLVMV).

Belongs to the complex I subunit 4L family. Core subunit of respiratory chain NADH dehydrogenase (Complex I) which is composed of 45 different subunits.

It localises to the mitochondrion inner membrane. The enzyme catalyses a ubiquinone + NADH + 5 H(+)(in) = a ubiquinol + NAD(+) + 4 H(+)(out). In terms of biological role, core subunit of the mitochondrial membrane respiratory chain NADH dehydrogenase (Complex I) which catalyzes electron transfer from NADH through the respiratory chain, using ubiquinone as an electron acceptor. Part of the enzyme membrane arm which is embedded in the lipid bilayer and involved in proton translocation. The protein is NADH-ubiquinone oxidoreductase chain 4L (MT-ND4L) of Oryctolagus cuniculus (Rabbit).